Reading from the N-terminus, the 317-residue chain is Melanocyte-stimulating hormone receptor (317 aa).

Residues 1-37 (MPVQGSQRRLLGSLNSTPTATPHLGLAANQTGARCLE) lie on the Extracellular side of the membrane. Asn-29 carries an N-linked (GlcNAc...) asparagine glycan. The chain crosses the membrane as a helical span at residues 38–63 (MSIPDGLFLSLGLVSLVENVLVVTAI). The Cytoplasmic segment spans residues 64–72 (AKNRNLHSP). Residues 73-93 (MYCFICCLALSDLLVSGSNML) traverse the membrane as a helical segment. Topologically, residues 94–118 (ETAVTLLLEAGALAARAAVVQQLDN) are extracellular. The helical transmembrane segment at 119–140 (VIDVITCSSMLSSLCFLGAIAV) threads the bilayer. Over 141–163 (DRYISIFYALRYHSIVTLPRARR) the chain is Cytoplasmic. Residues 164–183 (AIAAIWVASVLCSTLFIAYY) traverse the membrane as a helical segment. Residues 184-191 (DHAAVLLC) are Extracellular-facing. The chain crosses the membrane as a helical span at residues 192 to 211 (LVVFFLAMLVLMAVLYVHML). Residues 212–240 (ARACQHAQGIARLHKRQRLAHQGFGLKGA) are Cytoplasmic-facing. The chain crosses the membrane as a helical span at residues 241-266 (ATLTILLGIFFLCWGPFFLHLTLIVL). Over 267 to 279 (CPQHPTCSCIFKN) the chain is Extracellular. A helical membrane pass occupies residues 280–300 (FNLFLTLIICNAIIDPLIYAF). The Cytoplasmic portion of the chain corresponds to 301–317 (RSQELRRTLKEVLLCSW). The S-palmitoyl cysteine moiety is linked to residue Cys-315.

This sequence belongs to the G-protein coupled receptor 1 family. In terms of assembly, interacts with MGRN1, but does not undergo MGRN1-mediated ubiquitination; this interaction competes with GNAS-binding and thus inhibits agonist-induced cAMP production. Interacts with OPN3; the interaction results in a decrease in MC1R-mediated cAMP signaling and ultimately a decrease in melanin production in melanocytes.

Its subcellular location is the cell membrane. Functionally, receptor for MSH (alpha, beta and gamma) and ACTH. The activity of this receptor is mediated by G proteins which activate adenylate cyclase. Mediates melanogenesis, the production of eumelanin (black/brown) and phaeomelanin (red/yellow), via regulation of cAMP signaling in melanocytes. The polypeptide is Melanocyte-stimulating hormone receptor (MC1R) (Macaca nemestrina (Pig-tailed macaque)).